Reading from the N-terminus, the 283-residue chain is 4-diphosphocytidyl-2-C-methyl-D-erythritol kinase (283 aa).

K10 is an active-site residue. Residue 99–109 (PMGGGLGGGSS) coordinates ATP. D141 is an active-site residue.

Belongs to the GHMP kinase family. IspE subfamily. In terms of assembly, homodimer.

It carries out the reaction 4-CDP-2-C-methyl-D-erythritol + ATP = 4-CDP-2-C-methyl-D-erythritol 2-phosphate + ADP + H(+). Its pathway is isoprenoid biosynthesis; isopentenyl diphosphate biosynthesis via DXP pathway; isopentenyl diphosphate from 1-deoxy-D-xylulose 5-phosphate: step 3/6. In terms of biological role, catalyzes the phosphorylation of the position 2 hydroxy group of 4-diphosphocytidyl-2C-methyl-D-erythritol. This chain is 4-diphosphocytidyl-2-C-methyl-D-erythritol kinase, found in Escherichia coli (strain 55989 / EAEC).